Consider the following 524-residue polypeptide: Bifunctional methyltransferase (524 aa).

The tract at residues methionine 1 to proline 306 is hemK. The tract at residues methionine 1–asparagine 308 is RF MTase. S-adenosyl-L-methionine is bound by residues glycine 146–glycine 150, aspartate 169, tryptophan 198, asparagine 213, glutamate 353, glutamate 378, asparagine 405, and aspartate 427. Position 213–216 (asparagine 213–tyrosine 216) interacts with substrate. Positions isoleucine 307–histidine 524 are tRNA (guanine-N(7)-)-methyltransferase. Positions arginine 311–histidine 524 are tRNA MTase. The active site involves aspartate 427. The substrate site is built by lysine 431 and aspartate 463.

This sequence in the C-terminal section; belongs to the class I-like SAM-binding methyltransferase superfamily. TrmB family. The protein in the N-terminal section; belongs to the protein N5-glutamine methyltransferase family. PrmC subfamily.

It catalyses the reaction L-glutaminyl-[peptide chain release factor] + S-adenosyl-L-methionine = N(5)-methyl-L-glutaminyl-[peptide chain release factor] + S-adenosyl-L-homocysteine + H(+). The enzyme catalyses guanosine(46) in tRNA + S-adenosyl-L-methionine = N(7)-methylguanosine(46) in tRNA + S-adenosyl-L-homocysteine. Its function is as follows. Methylates the class 1 translation termination release factors RF1/PrfA and RF2/PrfB on the glutamine residue of the universally conserved GGQ motif. Functionally, catalyzes the formation of N(7)-methylguanine at position 46 (m7G46) in tRNA. This is Bifunctional methyltransferase (prmC/trmB) from Rickettsia conorii (strain ATCC VR-613 / Malish 7).